A 356-amino-acid polypeptide reads, in one-letter code: UDP-N-acetylglucosamine--N-acetylmuramyl-(pentapeptide) pyrophosphoryl-undecaprenol N-acetylglucosamine transferase (356 aa).

UDP-N-acetyl-alpha-D-glucosamine-binding positions include 12–14 (TGG), N124, R163, S188, I242, 261–266 (ALTVSE), and Q287.

This sequence belongs to the glycosyltransferase 28 family. MurG subfamily.

Its subcellular location is the cell inner membrane. It carries out the reaction di-trans,octa-cis-undecaprenyl diphospho-N-acetyl-alpha-D-muramoyl-L-alanyl-D-glutamyl-meso-2,6-diaminopimeloyl-D-alanyl-D-alanine + UDP-N-acetyl-alpha-D-glucosamine = di-trans,octa-cis-undecaprenyl diphospho-[N-acetyl-alpha-D-glucosaminyl-(1-&gt;4)]-N-acetyl-alpha-D-muramoyl-L-alanyl-D-glutamyl-meso-2,6-diaminopimeloyl-D-alanyl-D-alanine + UDP + H(+). It functions in the pathway cell wall biogenesis; peptidoglycan biosynthesis. Its function is as follows. Cell wall formation. Catalyzes the transfer of a GlcNAc subunit on undecaprenyl-pyrophosphoryl-MurNAc-pentapeptide (lipid intermediate I) to form undecaprenyl-pyrophosphoryl-MurNAc-(pentapeptide)GlcNAc (lipid intermediate II). In Pseudomonas fluorescens (strain ATCC BAA-477 / NRRL B-23932 / Pf-5), this protein is UDP-N-acetylglucosamine--N-acetylmuramyl-(pentapeptide) pyrophosphoryl-undecaprenol N-acetylglucosamine transferase.